We begin with the raw amino-acid sequence, 151 residues long: Ribosome maturation factor RimP (151 aa).

Belongs to the RimP family.

It localises to the cytoplasm. Required for maturation of 30S ribosomal subunits. The polypeptide is Ribosome maturation factor RimP (Halorhodospira halophila (strain DSM 244 / SL1) (Ectothiorhodospira halophila (strain DSM 244 / SL1))).